A 366-amino-acid chain; its full sequence is DNA replication and repair protein RecF (366 aa).

ATP is bound at residue 30–37 (GDNGMGKT).

The protein belongs to the RecF family.

The protein resides in the cytoplasm. Its function is as follows. The RecF protein is involved in DNA metabolism; it is required for DNA replication and normal SOS inducibility. RecF binds preferentially to single-stranded, linear DNA. It also seems to bind ATP. The sequence is that of DNA replication and repair protein RecF from Azobacteroides pseudotrichonymphae genomovar. CFP2.